A 271-amino-acid polypeptide reads, in one-letter code: MKPQKIIYKIEEFPAIHYLHNALTKNYDVIFKYSENIINNKKVSQIKRIPGQWTGQKADDFVNGLDDTWIYGWTDQNTWFNYLMIYNNHIINNGDDMDNQIINDIFIPIKSIINICGLSLLMPEATIKPHIDENTTISKNRLAYHFNVFGNGSIININGILLKQKPKKSLVFDSGFIHSVTNGNEYRLLIYIDFNVLLSKNFIYGRITDLSNDKIIIKSYYKHDNGIYNINHYNYGQGLATVSQYTVSLMFNNQRSDILKNDSILIEIISS.

This is an uncharacterized protein from Acanthamoeba polyphaga mimivirus (APMV).